The following is a 251-amino-acid chain: Large ribosomal subunit protein uL3 (251 aa).

2 disordered regions span residues 140 to 162 and 229 to 251; these read SHRS…NKKM and AAPA…EENA. Glutamine 151 is subject to N5-methylglutamine.

It belongs to the universal ribosomal protein uL3 family. Part of the 50S ribosomal subunit. Forms a cluster with proteins L14 and L19. In terms of processing, methylated by PrmB.

Its function is as follows. One of the primary rRNA binding proteins, it binds directly near the 3'-end of the 23S rRNA, where it nucleates assembly of the 50S subunit. The sequence is that of Large ribosomal subunit protein uL3 from Methylobacterium nodulans (strain LMG 21967 / CNCM I-2342 / ORS 2060).